The following is a 613-amino-acid chain: Arginine--tRNA ligase (613 aa).

The 'HIGH' region motif lies at P123–H133.

Belongs to the class-I aminoacyl-tRNA synthetase family. Monomer.

Its subcellular location is the cytoplasm. It carries out the reaction tRNA(Arg) + L-arginine + ATP = L-arginyl-tRNA(Arg) + AMP + diphosphate. In Caulobacter sp. (strain K31), this protein is Arginine--tRNA ligase.